Here is a 270-residue protein sequence, read N- to C-terminus: F420 non-reducing hydrogenase II cytochrome subunit (270 aa).

Helical transmembrane passes span 27–47 (AIAMIVLIITGLKIYAGWEFM), 57–77 (MIAVPFLLAVNWILIPYNIFS), 139–159 (ILIPLEGLALFLITVSGIVLY), 173–193 (WIISISGMIAPTFGMTPVGFL), and 195–215 (VLHLLMTYWFIFELVVHVGIL).

The protein belongs to the HupC/HyaC/HydC family. In terms of assembly, composed of a large subunit (VhtA), a small subunit (VhtG) and a cytochrome subunit (VhtC). Requires heme b as cofactor.

It localises to the cell membrane. The catalysed reaction is methanophenazine + H2 = dihydromethanophenazine. Functionally, part of the F420 non-reducing hydrogenase II complex that catalyzes the reduction of methanophenazine to dihydromethanophenazine. This Methanosarcina mazei (strain ATCC BAA-159 / DSM 3647 / Goe1 / Go1 / JCM 11833 / OCM 88) (Methanosarcina frisia) protein is F420 non-reducing hydrogenase II cytochrome subunit.